The primary structure comprises 157 residues: uncharacterized protein (157 aa).

The first 23 residues, 1 to 23 (MEALRRAHEATLRLLLCRPWASG), serve as a signal peptide directing secretion.

The protein resides in the secreted. This is an uncharacterized protein from Mus musculus (Mouse).